Reading from the N-terminus, the 376-residue chain is Palmitoyl-[acyl-carrier-protein] 4-desaturase 2, chloroplastic (376 aa).

Residues 1–33 constitute a chloroplast transit peptide; sequence MELHLALRASPLPAADPGRRPPPPRGNFATNCT. 6 residues coordinate Fe cation: E114, E149, H152, E202, E235, and H238.

Belongs to the fatty acid desaturase type 2 family. In terms of assembly, homodimer. Requires Fe(2+) as cofactor. Preferentially expressed in the flower labellum.

Its subcellular location is the plastid. It localises to the chloroplast stroma. It carries out the reaction hexadecanoyl-[ACP] + 2 reduced [2Fe-2S]-[ferredoxin] + O2 + 2 H(+) = (4Z)-hexadecenoyl-[ACP] + 2 oxidized [2Fe-2S]-[ferredoxin] + 2 H2O. The catalysed reaction is octadecanoyl-[ACP] + 2 reduced [2Fe-2S]-[ferredoxin] + O2 + 2 H(+) = (9Z)-octadecenoyl-[ACP] + 2 oxidized [2Fe-2S]-[ferredoxin] + 2 H2O. It functions in the pathway lipid metabolism; fatty acid metabolism. Converts stearoyl-ACP to oleoyl-ACP by introduction of a cis double bond between carbons 9 and 10 of the acyl chain. Converts palmitoyl-ACP to (4Z)-hexadec-4-enoyl-ACP by introduction of a cis double bond between carbons 4 and 5 of the acyl chain. Catalyzes the desaturation of saturated fatty acid 18:0 and 16:0 to generate 18:1 (delta-9) and 16:1 (delta-4) intermediates, expected to give rise to 9-alkenes and 12-alkenes, respectively. The sequence is that of Palmitoyl-[acyl-carrier-protein] 4-desaturase 2, chloroplastic (SAD2) from Ophrys sphegodes (Early spider orchid).